A 169-amino-acid chain; its full sequence is MSAKREFSHITLASTPFKKRIDQNSLKTDSDIEKDTNIAHKCAERFNYNTNLHRKVTLSDRFELAALGYEMKAKPRTIIEKHNDCDEFHFIYRKEKKNDYGTGSPLSAGLSLSNPLPAGRGFLSPAIQNTSNQFTFSGSPRITPQKHTPVSANHKPARSIFDDIPSNIA.

Residues 137–151 (SGSPRITPQKHTPVS) are compositionally biased toward polar residues. Residues 137 to 169 (SGSPRITPQKHTPVSANHKPARSIFDDIPSNIA) are disordered.

In terms of assembly, component of the pid-1 variant of the PETISCO complex (also called the pid-3, erh-2, tofu-6, and ife-3 small RNA complex) containing at least pid-1, tofu-6, ife-3, pid-3, and erh-2, which is required for the biogenesis of a class of 21 nucleotide PIWI-interacting RNAs (piRNAs) that possess a uracil residue at the 5'-end (also called 21U-RNAs). Within the complex interacts with pid-3; the interaction is direct. Within the complex interacts with erh-2. Within the complex interacts with tofu-6. In terms of tissue distribution, expressed predominantly in the germline (at protein level).

It is found in the cytoplasm. It localises to the nucleus. Its subcellular location is the perinuclear region. Functionally, component of the pid-1 variant of the PETISCO complex which is required for the biogenesis of a class of 21 nucleotide PIWI-interacting RNAs (piRNAs) that possess a uracil residue at the 5'-end (also called 21U-RNAs). Within the complex acts as an adapter which binds to the complex via erh-2. Involved in the biogenesis of 21U-RNAs which guide the piwi protein prg-1 to its DNA targets for silencing. Plays a role in small RNA-directed transgenerational epigenetic inheritance. This chain is Protein pid-1, found in Caenorhabditis elegans.